The sequence spans 221 residues: UPF0502 protein PLES_16071 (221 aa).

Belongs to the UPF0502 family.

This chain is UPF0502 protein PLES_16071, found in Pseudomonas aeruginosa (strain LESB58).